A 609-amino-acid polypeptide reads, in one-letter code: Glutamine--fructose-6-phosphate aminotransferase [isomerizing] (609 aa).

Cys2 serves as the catalytic Nucleophile; for GATase activity. The Glutamine amidotransferase type-2 domain occupies 2 to 218; sequence CGIVGAVAQR…EGDVAEVTRR (217 aa). 2 consecutive SIS domains span residues 286 to 426 and 458 to 599; these read AAEF…HNGM and LAED…VDQP. The For Fru-6P isomerization activity role is filled by Lys604.

Homodimer.

The protein localises to the cytoplasm. It carries out the reaction D-fructose 6-phosphate + L-glutamine = D-glucosamine 6-phosphate + L-glutamate. Catalyzes the first step in hexosamine metabolism, converting fructose-6P into glucosamine-6P using glutamine as a nitrogen source. The sequence is that of Glutamine--fructose-6-phosphate aminotransferase [isomerizing] from Shewanella oneidensis (strain ATCC 700550 / JCM 31522 / CIP 106686 / LMG 19005 / NCIMB 14063 / MR-1).